The chain runs to 262 residues: Putative hydro-lyase Mflv_5194 (262 aa).

The protein belongs to the D-glutamate cyclase family.

This is Putative hydro-lyase Mflv_5194 from Mycolicibacterium gilvum (strain PYR-GCK) (Mycobacterium gilvum (strain PYR-GCK)).